Consider the following 819-residue polypeptide: Leucine--tRNA ligase (819 aa).

Positions proline 42–histidine 53 match the 'HIGH' region motif. The short motif at arginine 578–serine 582 is the 'KMSKS' region element. Lysine 581 contributes to the ATP binding site.

Belongs to the class-I aminoacyl-tRNA synthetase family.

It localises to the cytoplasm. The catalysed reaction is tRNA(Leu) + L-leucine + ATP = L-leucyl-tRNA(Leu) + AMP + diphosphate. The polypeptide is Leucine--tRNA ligase (Caldanaerobacter subterraneus subsp. tengcongensis (strain DSM 15242 / JCM 11007 / NBRC 100824 / MB4) (Thermoanaerobacter tengcongensis)).